The sequence spans 363 residues: Copper-containing nitrite reductase (363 aa).

An N-terminal signal peptide occupies residues 1–24; the sequence is MSVFRSVLGACVLLGSCASSLALA. Plastocyanin-like domains follow at residues 25 to 193 and 194 to 363; these read GGAE…YDRV and YTIG…EPKQ. His113, His118, His153, Cys154, His163, Met168, and His324 together coordinate Cu cation.

Belongs to the multicopper oxidase family. As to quaternary structure, homotrimer. It depends on Cu(2+) as a cofactor. Cu(+) is required as a cofactor. Requires FAD as cofactor.

It localises to the periplasm. The catalysed reaction is nitric oxide + Fe(III)-[cytochrome c] + H2O = Fe(II)-[cytochrome c] + nitrite + 2 H(+). It functions in the pathway nitrogen metabolism; nitrate reduction (denitrification); dinitrogen from nitrate: step 2/4. The polypeptide is Copper-containing nitrite reductase (nirK) (Pseudomonas chlororaphis (Pseudomonas aureofaciens)).